The chain runs to 333 residues: Nucleoid-associated protein VV1_3120 (333 aa).

The protein belongs to the YejK family.

Its subcellular location is the cytoplasm. The protein resides in the nucleoid. This chain is Nucleoid-associated protein VV1_3120, found in Vibrio vulnificus (strain CMCP6).